We begin with the raw amino-acid sequence, 34 residues long: GKEKDVFMDKLRDAGAAGIDYLKHFTHHIVKKKN.

In terms of tissue distribution, expressed by the venom gland.

Its subcellular location is the secreted. Functionally, may have antimicrobial properties, like most ant linear peptides. The polypeptide is U1-poneritoxin-Na2a (Neoponera apicalis (Ant)).